We begin with the raw amino-acid sequence, 442 residues long: Histidine--tRNA ligase (442 aa).

This sequence belongs to the class-II aminoacyl-tRNA synthetase family. Homodimer.

It localises to the cytoplasm. The enzyme catalyses tRNA(His) + L-histidine + ATP = L-histidyl-tRNA(His) + AMP + diphosphate + H(+). The polypeptide is Histidine--tRNA ligase (Rhodopirellula baltica (strain DSM 10527 / NCIMB 13988 / SH1)).